A 1282-amino-acid chain; its full sequence is Clustered mitochondria protein homolog (1282 aa).

Residues 1 to 50 are disordered; it reads MADASQATTPAAEGNPVPEVPETQTPPADVNGTTEQEQTEEGAEQALEDQ. Low complexity predominate over residues 16 to 36; the sequence is PVPEVPETQTPPADVNGTTEQ. Over residues 37-47 the composition is skewed to acidic residues; the sequence is EQTEEGAEQAL. Residues 331 to 575 enclose the Clu domain; sequence DNTRSQETYL…RITPLDIAWM (245 aa). Residues 623 to 650 are a coiled coil; sequence EEKKEGEEATEEAKTEEIKTEEAEKSEE. 2 stretches are compositionally biased toward basic and acidic residues: residues 624-661 and 668-680; these read EKKE…KTEE and VAEK…AKED. 2 disordered regions span residues 624-680 and 913-945; these read EKKE…AKED and PVAE…TSPV. TPR repeat units follow at residues 1021–1054, 1063–1096, and 1105–1138; these read AQMY…AERT, VLNY…WKVI, and ITTM…CNKV. Residues 1257–1282 form a disordered region; it reads VENSEKKKGGKKSKGPSNPKKRGGKA. A compositionally biased stretch (basic residues) spans 1264 to 1282; sequence KGGKKSKGPSNPKKRGGKA.

Belongs to the CLU family. In terms of assembly, may associate with the eukaryotic translation initiation factor 3 (eIF-3) complex.

Its subcellular location is the cytoplasm. Functionally, mRNA-binding protein involved in proper cytoplasmic distribution of mitochondria. This chain is Clustered mitochondria protein homolog, found in Neurospora crassa (strain ATCC 24698 / 74-OR23-1A / CBS 708.71 / DSM 1257 / FGSC 987).